The chain runs to 306 residues: Tryptophan 2,3-dioxygenase (306 aa).

The interval 1-33 (MQPPGDDAAPRCPFAGAHAPDAPHVPEAAGDDA) is disordered. Substrate is bound by residues 75 to 79 (FIIQH), tyrosine 137, and arginine 141. Residue histidine 264 participates in heme binding. A substrate-binding site is contributed by threonine 278.

It belongs to the tryptophan 2,3-dioxygenase family. In terms of assembly, homotetramer. Requires heme as cofactor.

The enzyme catalyses L-tryptophan + O2 = N-formyl-L-kynurenine. The protein operates within amino-acid degradation; L-tryptophan degradation via kynurenine pathway; L-kynurenine from L-tryptophan: step 1/2. Functionally, heme-dependent dioxygenase that catalyzes the oxidative cleavage of the L-tryptophan (L-Trp) pyrrole ring and converts L-tryptophan to N-formyl-L-kynurenine. Catalyzes the oxidative cleavage of the indole moiety. The sequence is that of Tryptophan 2,3-dioxygenase from Burkholderia pseudomallei (strain 1106a).